We begin with the raw amino-acid sequence, 477 residues long: Proton extrusion protein PxcA (477 aa).

3 helical membrane passes run 239 to 259 (FILL…ITFV), 354 to 374 (GIKN…IIST), and 437 to 457 (FNFL…KYWI).

The protein belongs to the CemA family.

The protein localises to the cell inner membrane. Its function is as follows. Required for H(+) efflux immediately after light irradiation to form a rapid H(+) concentration gradient across the thylakoid membranes. Together with PxcL, contributes to transient H(+) uptake following dark to light transition. This is Proton extrusion protein PxcA from Trichodesmium erythraeum (strain IMS101).